The primary structure comprises 1026 residues: Chromodomain-helicase-DNA-binding protein 1-like (1026 aa).

One can recognise a Helicase ATP-binding domain in the interval 47–212 (SLCMKNQQGC…YSLLTFIQPS (166 aa)). 60–67 (DEMGLGKT) is a binding site for ATP. Positions 163–166 (DEAH) match the DEAH box motif. The region spanning 340-494 (LLDSMLAYLQ…EGRFSLLDQA (155 aa)) is the Helicase C-terminal domain. Positions 540–668 (LTDEEHAKLN…EELNYKKKMA (129 aa)) form a coiled coil. Residues 594 to 628 (AEMEDAEKEGRALRNKAGVSLSGPLINPARKKRPL) form a regulatory linker segment (RLS) region. The disordered stretch occupies residues 606–655 (LRNKAGVSLSGPLINPARKKRPLTEAELEERRQKRQAAAAKRAKLQEERK). The tract at residues 608-666 (NKAGVSLSGPLINPARKKRPLTEAELEERRQKRQAAAAKRAKLQEERKKQQEELNYKKK) is required for ATPase activity. Residues 697–870 (HVSFSSTDSD…IFTSIYYYRR (174 aa)) form the Macro domain. Low complexity predominate over residues 877-907 (VSSTASTTTPSSSKPAASSPSESPHSSSPPA). Residues 877-929 (VSSTASTTTPSSSKPAASSPSESPHSSSPPANREGLTKSAELSTTSHEGPGAP) form a disordered region. The region spanning 930–1023 (GLADFMRGVH…RKVSVSKYVI (94 aa)) is the BRCT domain.

Belongs to the SNF2/RAD54 helicase family. As to quaternary structure, interacts with nucleosomes; interacts with the acidic patch of histones.

It is found in the nucleus. The protein resides in the chromosome. The catalysed reaction is ATP + H2O = ADP + phosphate + H(+). Adopts an inactive conformation in absence of DNA damage. Binding to poly-ADP-ribosylated histones activates the ATP-dependent chromatin remodeler activity. Functionally, ATP-dependent chromatin remodeler that mediates chromatin-remodeling following DNA damage. Recruited to DNA damage sites through interaction with poly-ADP-ribose: specifically recognizes and binds histones that are poly-ADP-ribosylated on serine residues in response to DNA damage. Poly-ADP-ribose-binding activates the ATP-dependent chromatin remodeler activity, thereby regulating chromatin during DNA repair. Catalyzes nucleosome sliding away from DNA breaks in an ATP-dependent manner. The polypeptide is Chromodomain-helicase-DNA-binding protein 1-like (chd1l) (Danio rerio (Zebrafish)).